Consider the following 406-residue polypeptide: Olfactomedin-like protein 3 (406 aa).

The N-terminal stretch at 1 to 21 is a signal peptide; the sequence is MGPHTQLLILLLLSWLGPLQG. A coiled-coil region spans residues 22–101; sequence QQHHLVEYME…REVDYLETQN (80 aa). The 268-residue stretch at 134-401 folds into the Olfactomedin-like domain; sequence DCGYTISQVR…QIVYKLEMRK (268 aa). Cys-135 and Cys-328 are joined by a disulfide. Asn-248 carries N-linked (GlcNAc...) asparagine glycosylation.

Belongs to the OLFML3 family.

Its subcellular location is the secreted. Its function is as follows. Secreted scaffold protein that plays an essential role in dorsoventral patterning during early development. Stabilizes axial formation by restricting chordin (CHRD) activity on the dorsal side. Acts by facilitating the association between the tolloid proteases and their substrate chordin (CHRD), leading to enhance chordin (CHRD) degradation. May have matrix-related function involved in placental and embryonic development, or play a similar role in other physiological processes. This chain is Olfactomedin-like protein 3 (OLFML3), found in Bos taurus (Bovine).